We begin with the raw amino-acid sequence, 452 residues long: tRNA modification GTPase MnmE (452 aa).

Residues arginine 21, glutamate 78, and lysine 118 each contribute to the (6S)-5-formyl-5,6,7,8-tetrahydrofolate site. Residues 214-375 (GMKVVIAGRP…LREHLKKSMG (162 aa)) form the TrmE-type G domain. Residue asparagine 224 coordinates K(+). GTP-binding positions include 224-229 (NAGKSS), 243-249 (TNIAGTT), and 268-271 (DTAG). Residue serine 228 coordinates Mg(2+). Residues threonine 243, isoleucine 245, and threonine 248 each contribute to the K(+) site. Threonine 249 contributes to the Mg(2+) binding site. Lysine 452 is a binding site for (6S)-5-formyl-5,6,7,8-tetrahydrofolate.

It belongs to the TRAFAC class TrmE-Era-EngA-EngB-Septin-like GTPase superfamily. TrmE GTPase family. Homodimer. Heterotetramer of two MnmE and two MnmG subunits. Requires K(+) as cofactor.

The protein localises to the cytoplasm. Exhibits a very high intrinsic GTPase hydrolysis rate. Involved in the addition of a carboxymethylaminomethyl (cmnm) group at the wobble position (U34) of certain tRNAs, forming tRNA-cmnm(5)s(2)U34. The protein is tRNA modification GTPase MnmE of Actinobacillus pleuropneumoniae serotype 5b (strain L20).